The primary structure comprises 855 residues: MESRYNPTEIEPKWQASWAKQGLDATPEDTSKPKFYALSMFPYPSGSLHVGHTRNYVITDVIARLKRMQGYRVLQPMGWDAFGLPAENAAIARGIHPAEWTYANMAQMKKQLEPLGLSIDWSREIATCSPDYYRWTQWIFLQFLDMGLAYQKEAAVNWDPVDQTVLANEQVDNEGRSWRSGAKVERKLLRQWFLKITDYAEELLTDLDKLTGWPERVKTMQANWIGKSVGAYLEFPIVGMDEKVAVFTTRPDTVYGVTYVVLAPEHPLTPQVTSKAQKKAVDKFIEAVGAESEMDRTAEDKPKKGIPTGGKAINPFTGEEIPIWIADYVLYEYGTGAVMGVPAHDTRDFVFAQQNKLPIQTVIVPEGGDAETPLEAAYTEPGLMVNSGEFDGKVSTEGKQAIIAKAETKGWGKARVQYRLRDWLISRQRYWGVPIPVIHCPNCGAVPVPEADLPVELPEDVEFSAQGGSPLAKLESWVNVACPNCGADAKRETDTMDTFIDSSWYFLRYPDAKNDKAVFDSAKTNDWLPVDQYVGGIEHAILHLLYSRFFTKVMRDRKLLNFDEPFKKLLTQGMVQALTYKNPETGQYIAPINVDADDPKDPETGAPLEAFYEKMSKSKYNGVPPEEVTNKYGADTARLFTLFKAPPEKDLEWEGADVEGQFRFLNRVWRLVSEHAAQAKGKKAKVNKAKLSKTEKELRRSIHIAIKETSEDLDGDYQFNTAVSELMKLSNALSDSKEKASPVYAEGVETLLLLLTPFAPHISEELWENLGHSESILGQTWPQVDEEALVADEITLVIQIMGKTRGTIQVPAGSSREDLEQLARESEVAQRYIAGKEVKKVIVVPGKLVNFVVPK.

The short motif at 42 to 52 (PYPSGSLHVGH) is the 'HIGH' region element. A disordered region spans residues 292–311 (SEMDRTAEDKPKKGIPTGGK). Over residues 293–303 (EMDRTAEDKPK) the composition is skewed to basic and acidic residues. The 'KMSKS' region signature appears at 614 to 618 (KMSKS). ATP is bound at residue Lys-617.

It belongs to the class-I aminoacyl-tRNA synthetase family.

Its subcellular location is the cytoplasm. It catalyses the reaction tRNA(Leu) + L-leucine + ATP = L-leucyl-tRNA(Leu) + AMP + diphosphate. This chain is Leucine--tRNA ligase, found in Acaryochloris marina (strain MBIC 11017).